The following is a 120-amino-acid chain: NAD(P)H-quinone oxidoreductase subunit 3, chloroplastic (120 aa).

The next 3 helical transmembrane spans lie at 9–29, 64–84, and 88–108; these read IFWA…LLSG, MFAL…PWAM, and VLGV…IVGL.

Belongs to the complex I subunit 3 family. NDH is composed of at least 16 different subunits, 5 of which are encoded in the nucleus.

The protein localises to the plastid. It is found in the chloroplast thylakoid membrane. The enzyme catalyses a plastoquinone + NADH + (n+1) H(+)(in) = a plastoquinol + NAD(+) + n H(+)(out). The catalysed reaction is a plastoquinone + NADPH + (n+1) H(+)(in) = a plastoquinol + NADP(+) + n H(+)(out). NDH shuttles electrons from NAD(P)H:plastoquinone, via FMN and iron-sulfur (Fe-S) centers, to quinones in the photosynthetic chain and possibly in a chloroplast respiratory chain. The immediate electron acceptor for the enzyme in this species is believed to be plastoquinone. Couples the redox reaction to proton translocation, and thus conserves the redox energy in a proton gradient. The protein is NAD(P)H-quinone oxidoreductase subunit 3, chloroplastic of Fagopyrum esculentum subsp. ancestrale (Wild buckwheat).